Reading from the N-terminus, the 326-residue chain is Protein-arginine N-acetylglucosaminyltransferase NleB2 (326 aa).

UDP-N-acetyl-alpha-D-glucosamine-binding positions include 45–47 (QWF), Y69, and 216–219 (YLDM). The DXD motif motif lies at 218 to 220 (DMD). A Mn(2+)-binding site is contributed by D220. The Proton acceptor role is filled by E250. Mn(2+) is bound by residues N317 and S319. UDP-N-acetyl-alpha-D-glucosamine is bound by residues S319 and 324–326 (SSW).

Belongs to the glycosyltransferase NleB family. The cofactor is Mn(2+).

It is found in the secreted. The protein localises to the host cell. The catalysed reaction is L-arginyl-[protein] + UDP-N-acetyl-alpha-D-glucosamine = N(omega)-(N-acetyl-beta-D-glucosaminyl)-L-arginyl-[protein] + UDP + H(+). In terms of biological role, protein-arginine N-acetylglucosaminyltransferase effector that catalyzes the transfer of a single N-acetylglucosamine (GlcNAc) to a conserved arginine residue of host target proteins. In contrast to NleB1, not able to disrupt TNF signaling in infected cells. Shows a lower enzymatic activity than NleB1. In Escherichia coli O127:H6 (strain E2348/69 / EPEC), this protein is Protein-arginine N-acetylglucosaminyltransferase NleB2.